The following is a 397-amino-acid chain: Bifunctional enzyme IspD/IspF (397 aa).

The segment at 1 to 233 (MCAKKYKIAA…KLLFEEPKFR (233 aa)) is 2-C-methyl-D-erythritol 4-phosphate cytidylyltransferase. The 2-C-methyl-D-erythritol 2,4-cyclodiphosphate synthase stretch occupies residues 233–397 (RVGAGYDIHK…VLLHTNFYWK (165 aa)). A divalent metal cation-binding residues include aspartate 239 and histidine 241. 4-CDP-2-C-methyl-D-erythritol 2-phosphate contacts are provided by residues 239 to 241 (DIH) and 270 to 271 (HS). Residue histidine 278 participates in a divalent metal cation binding. 4-CDP-2-C-methyl-D-erythritol 2-phosphate-binding positions include 292-294 (DIG), 368-371 (TTAE), tyrosine 375, and arginine 378.

This sequence in the N-terminal section; belongs to the IspD/TarI cytidylyltransferase family. IspD subfamily. The protein in the C-terminal section; belongs to the IspF family. The cofactor is a divalent metal cation.

The catalysed reaction is 2-C-methyl-D-erythritol 4-phosphate + CTP + H(+) = 4-CDP-2-C-methyl-D-erythritol + diphosphate. It carries out the reaction 4-CDP-2-C-methyl-D-erythritol 2-phosphate = 2-C-methyl-D-erythritol 2,4-cyclic diphosphate + CMP. It functions in the pathway isoprenoid biosynthesis; isopentenyl diphosphate biosynthesis via DXP pathway; isopentenyl diphosphate from 1-deoxy-D-xylulose 5-phosphate: step 2/6. Its pathway is isoprenoid biosynthesis; isopentenyl diphosphate biosynthesis via DXP pathway; isopentenyl diphosphate from 1-deoxy-D-xylulose 5-phosphate: step 4/6. Its function is as follows. Bifunctional enzyme that catalyzes the formation of 4-diphosphocytidyl-2-C-methyl-D-erythritol from CTP and 2-C-methyl-D-erythritol 4-phosphate (MEP) (IspD), and catalyzes the conversion of 4-diphosphocytidyl-2-C-methyl-D-erythritol 2-phosphate (CDP-ME2P) to 2-C-methyl-D-erythritol 2,4-cyclodiphosphate (ME-CPP) with a corresponding release of cytidine 5-monophosphate (CMP) (IspF). In Wolbachia pipientis wMel, this protein is Bifunctional enzyme IspD/IspF.